Reading from the N-terminus, the 192-residue chain is MTHYILLIIGTALINNFVLVKFLGLCPFMGVSKKIETAVGMGLATMFVLTVASLCAYLVDHYILIPLNATFLRTLVFILVIAVVVQFTEMAINKTSPTLYRLLGIFLPLITTNCAVLGVALLNVNLAHNLTESVVYGFGASLGFSLVLVLFAALRERLVAADIPATFRGSAIALITAGLMSLAFMGFTGLVK.

6 consecutive transmembrane segments (helical) span residues 5–25 (ILLI…FLGL), 39–59 (VGMG…AYLV), 63–83 (ILIP…VIAV), 102–122 (LLGI…VALL), 134–154 (VVYG…FAAL), and 171–191 (AIAL…TGLV).

This sequence belongs to the NqrDE/RnfAE family. In terms of assembly, the complex is composed of six subunits: RnfA, RnfB, RnfC, RnfD, RnfE and RnfG.

The protein localises to the cell inner membrane. Part of a membrane-bound complex that couples electron transfer with translocation of ions across the membrane. This chain is Ion-translocating oxidoreductase complex subunit A, found in Haemophilus influenzae (strain 86-028NP).